We begin with the raw amino-acid sequence, 409 residues long: Dihydroorotase (409 aa).

Zn(2+)-binding residues include histidine 57 and histidine 59. Substrate contacts are provided by residues 59 to 61 (HLR) and asparagine 91. Lysine 139, histidine 168, histidine 208, and aspartate 276 together coordinate Zn(2+). Lysine 139 carries the N6-carboxylysine modification. Residue aspartate 276 is part of the active site. Substrate contacts are provided by residues histidine 280 and 290 to 291 (AG).

It belongs to the metallo-dependent hydrolases superfamily. DHOase family. Class I DHOase subfamily. It depends on Zn(2+) as a cofactor.

The catalysed reaction is (S)-dihydroorotate + H2O = N-carbamoyl-L-aspartate + H(+). It participates in pyrimidine metabolism; UMP biosynthesis via de novo pathway; (S)-dihydroorotate from bicarbonate: step 3/3. Functionally, catalyzes the reversible cyclization of carbamoyl aspartate to dihydroorotate. The chain is Dihydroorotase from Thermococcus kodakarensis (strain ATCC BAA-918 / JCM 12380 / KOD1) (Pyrococcus kodakaraensis (strain KOD1)).